Consider the following 250-residue polypeptide: Phosphonates import ATP-binding protein PhnC (250 aa).

Residues 2 to 247 (IVFNNVNKVW…KLDAQAMKKI (246 aa)) enclose the ABC transporter domain. 35 to 42 (GLSGAGKT) is a binding site for ATP.

Belongs to the ABC transporter superfamily. Phosphonates importer (TC 3.A.1.9.1) family. As to quaternary structure, the complex is composed of two ATP-binding proteins (PhnC), two transmembrane proteins (PhnE) and a solute-binding protein (PhnD).

It is found in the cell membrane. It catalyses the reaction phosphonate(out) + ATP + H2O = phosphonate(in) + ADP + phosphate + H(+). Its function is as follows. Part of the ABC transporter complex PhnCDE involved in phosphonates import. Responsible for energy coupling to the transport system. The polypeptide is Phosphonates import ATP-binding protein PhnC (Mycoplasma mycoides subsp. mycoides SC (strain CCUG 32753 / NCTC 10114 / PG1)).